We begin with the raw amino-acid sequence, 319 residues long: uncharacterized protein (319 aa).

Positions 36 to 178 (IIEFLLSFKG…MTVIHEERGF (143 aa)) constitute an SIS domain. 51-56 (GIGKSG) provides a ligand contact to ATP. CBS domains are found at residues 203–263 (MRSG…HLKT) and 268–319 (MTKN…MGVS).

The protein belongs to the SIS family. GutQ/KpsF subfamily.

This is an uncharacterized protein from Rickettsia prowazekii (strain Madrid E).